The sequence spans 469 residues: Serine hydroxymethyltransferase, cytosolic (469 aa).

The residue at position 20 (T20) is a Phosphothreonine. A Phosphoserine modification is found at S26. K248 carries the N6-(pyridoxal phosphate)lysine modification. A Phosphoserine modification is found at S429. K456 is covalently cross-linked (Glycyl lysine isopeptide (Lys-Gly) (interchain with G-Cter in ubiquitin)).

It belongs to the SHMT family. Homotetramer. It depends on pyridoxal 5'-phosphate as a cofactor.

The protein localises to the cytoplasm. It carries out the reaction (6R)-5,10-methylene-5,6,7,8-tetrahydrofolate + glycine + H2O = (6S)-5,6,7,8-tetrahydrofolate + L-serine. Its pathway is one-carbon metabolism; tetrahydrofolate interconversion. Its function is as follows. Interconversion of serine and glycine. The sequence is that of Serine hydroxymethyltransferase, cytosolic from Saccharomyces cerevisiae (strain ATCC 204508 / S288c) (Baker's yeast).